We begin with the raw amino-acid sequence, 232 residues long: Flagellar L-ring protein (232 aa).

A signal peptide spans 1 to 21; sequence MQKYALHAYPVMALMVATLTG. Cys-22 is lipidated: N-palmitoyl cysteine. The S-diacylglycerol cysteine moiety is linked to residue Cys-22.

This sequence belongs to the FlgH family. In terms of assembly, the basal body constitutes a major portion of the flagellar organelle and consists of four rings (L,P,S, and M) mounted on a central rod.

It localises to the cell outer membrane. The protein localises to the bacterial flagellum basal body. Assembles around the rod to form the L-ring and probably protects the motor/basal body from shearing forces during rotation. The chain is Flagellar L-ring protein from Salmonella choleraesuis (strain SC-B67).